Consider the following 300-residue polypeptide: MNTKAMLETLNEITLLVDEPLKNVTFTKTGGPADVLALPKTKKEVEEIVAYCREQGLSWLVLGNASNLIVRDGGIRDVVIMLTEMKEIKVAGTTMIVDAGAKLIDTTYEALAADLTGFEFACGIPGSVGGAVYMNAGAYGGEIKDVFQSAEVLLADGTIQTMTKEDLNFRYRHSEIQELHCIVLQATFALEKGNHAEIKAQMDELTELRELKQPLEYPSCGSVFKRPVGHFTGKLIQDAGLQGLKWGGAQISEKHAGFIVNIDHATATDYVELIAHIQEVIKEKFDVELQTEVRIIGEEV.

The region spanning 28–193 (KTGGPADVLA…LQATFALEKG (166 aa)) is the FAD-binding PCMH-type domain. Arg-172 is a catalytic residue. Residue Ser-222 is the Proton donor of the active site. Residue Glu-292 is part of the active site.

The protein belongs to the MurB family. The cofactor is FAD.

The protein resides in the cytoplasm. It catalyses the reaction UDP-N-acetyl-alpha-D-muramate + NADP(+) = UDP-N-acetyl-3-O-(1-carboxyvinyl)-alpha-D-glucosamine + NADPH + H(+). Its pathway is cell wall biogenesis; peptidoglycan biosynthesis. In terms of biological role, cell wall formation. This is UDP-N-acetylenolpyruvoylglucosamine reductase from Enterococcus faecalis (strain ATCC 700802 / V583).